The chain runs to 447 residues: MHLAQLRQPLTRAAANSCHSVCRLPTTHSSVSATAILSEQFAHLRIGPSSSNVAVEGRRYASVKAQGAYRLKPKRTIPKKLGAKKTGDQYVIPGNIIYKQRGTLWHPGENTIMGRDHTIHAAVAGYVKYYRDPQLHPDRQYIGVVFNRNDKLPYPKDAPRKRKLGLVAVPRKVEEVEKPTMSASGLPLFVTRHETIEIPPPAVTTPAAAGKAVKGQGARVSASGAAAVPASSSTISASASSNSNNGGSSVIAELIKEKLAARAEYNARQSALRKLQQQKMLARRGTRVLRLMNNYSYRETNWEIGRLIGDPGSVPGTEKVGSRKAKFRARRRRRNTFLLGIKERKLAKADRREEYRRRVREKREQRLVQRKEFLAKQREAKKAREGGAAAEKSEKKEVKAEKPAAAAPKVEKPKAPEAAKKESKPKVEEKKAAAAEPKKDSKTEKKD.

Composition is skewed to basic and acidic residues over residues 377-402 (QREA…KAEK) and 409-447 (KVEK…EKKD). The tract at residues 377 to 447 (QREAKKAREG…KKDSKTEKKD (71 aa)) is disordered.

The protein belongs to the bacterial ribosomal protein bL27 family. Component of the mitochondrial large ribosomal subunit (mt-LSU). Mature N.crassa 74S mitochondrial ribosomes consist of a small (37S) and a large (54S) subunit. The 37S small subunit contains a 16S ribosomal RNA (16S mt-rRNA) and 32 different proteins. The 54S large subunit contains a 23S rRNA (23S mt-rRNA) and 42 different proteins.

Its subcellular location is the mitochondrion. Component of the mitochondrial ribosome (mitoribosome), a dedicated translation machinery responsible for the synthesis of mitochondrial genome-encoded proteins, including at least some of the essential transmembrane subunits of the mitochondrial respiratory chain. The mitoribosomes are attached to the mitochondrial inner membrane and translation products are cotranslationally integrated into the membrane. The polypeptide is Large ribosomal subunit protein bL27m (mrp7) (Neurospora crassa (strain ATCC 24698 / 74-OR23-1A / CBS 708.71 / DSM 1257 / FGSC 987)).